A 129-amino-acid polypeptide reads, in one-letter code: UPF0102 protein Ctha_1382 (129 aa).

Belongs to the UPF0102 family.

The polypeptide is UPF0102 protein Ctha_1382 (Chloroherpeton thalassium (strain ATCC 35110 / GB-78)).